The sequence spans 300 residues: ATP-dependent (S)-NAD(P)H-hydrate dehydratase (300 aa).

A YjeF C-terminal domain is found at 6 to 297; sequence YAGKIKEFIP…GCIHQSFTSL (292 aa). Residues Gly106 and 158–164 contribute to the (6S)-NADPHX site; that span reads NEVEFKR. Residues 188 to 192 and 218 to 227 contribute to the ATP site; these read KGSTD and GSNRRCGGQG. Asp228 contacts (6S)-NADPHX.

It belongs to the NnrD/CARKD family. It depends on Mg(2+) as a cofactor.

It carries out the reaction (6S)-NADHX + ATP = ADP + phosphate + NADH + H(+). The catalysed reaction is (6S)-NADPHX + ATP = ADP + phosphate + NADPH + H(+). Its function is as follows. Catalyzes the dehydration of the S-form of NAD(P)HX at the expense of ATP, which is converted to ADP. Together with NAD(P)HX epimerase, which catalyzes the epimerization of the S- and R-forms, the enzyme allows the repair of both epimers of NAD(P)HX, a damaged form of NAD(P)H that is a result of enzymatic or heat-dependent hydration. The sequence is that of ATP-dependent (S)-NAD(P)H-hydrate dehydratase from Pediculus humanus subsp. corporis (Body louse).